The primary structure comprises 567 residues: Geranylgeranyl transferase type-2 subunit alpha (567 aa).

PFTA repeat units follow at residues 44-78, 88-122, 124-158, 159-193, 207-241, and 363-397; these read LDES…RLEV, LVKA…RLPE, NWAR…QAAV, PPAE…QLHP, VLLK…RADP, and VLQS…ALDP. Ser-98 bears the Phosphoserine mark. LRR repeat units follow at residues 442 to 463, 464 to 486, 487 to 508, 509 to 530, and 534 to 555; these read DVRV…EQLL, LVTH…AALR, CLEV…TNLP, RLQE…QPLA, and RLVL…SEHL.

Belongs to the protein prenyltransferase subunit alpha family. As to quaternary structure, heterotrimer composed of RABGGTA, RABGGTB and CHM; within this trimer, RABGGTA and RABGGTB form the catalytic component B, while CHM (component A) mediates peptide substrate binding. The Rab GGTase dimer (RGGT) interacts with CHM (component A) prior to Rab protein binding; the association is stabilized by geranylgeranyl pyrophosphate (GGpp). The CHM:RGGT:Rab complex is destabilized by GGpp. Interacts with non-phosphorylated form of RAB8A; phosphorylation of RAB8A disrupts this interaction.

The catalysed reaction is geranylgeranyl diphosphate + L-cysteinyl-[protein] = S-geranylgeranyl-L-cysteinyl-[protein] + diphosphate. Its activity is regulated as follows. The enzymatic reaction requires the aid of a Rab escort protein (also called component A), such as CHM. Its function is as follows. Catalyzes the transfer of a geranylgeranyl moiety from geranylgeranyl diphosphate to both cysteines of Rab proteins with the C-terminal sequence -XXCC, -XCXC and -CCXX, such as RAB1A, RAB3A, RAB5A and RAB7A. This chain is Geranylgeranyl transferase type-2 subunit alpha (RABGGTA), found in Sus scrofa (Pig).